Here is a 208-residue protein sequence, read N- to C-terminus: Pyrophosphate-energized proton pump 2 (208 aa).

5 helical membrane-spanning segments follow: residues 19–39, 54–74, 89–109, 140–160, and 167–187; these read AYPLAICAACVITSIIGTFFV, GLIVTGALSILGLGAATSFTI, GGNLFVCGLIGLVVTALIVVI, LAVSLESTALPAIVIVGGIIA, and LFGTAIAVTAMLGLAGMIVAL.

Belongs to the H(+)-translocating pyrophosphatase (TC 3.A.10) family. In terms of assembly, homodimer. The cofactor is Mg(2+).

It is found in the cell inner membrane. The enzyme catalyses diphosphate + H2O + H(+)(in) = 2 phosphate + 2 H(+)(out). Proton pump that utilizes the energy of pyrophosphate hydrolysis as the driving force for proton movement across the membrane. Generates a proton motive force. The polypeptide is Pyrophosphate-energized proton pump 2 (hppA2) (Mycoplana dimorpha).